The following is a 209-amino-acid chain: ATP-dependent dethiobiotin synthetase BioD (209 aa).

13–18 (DIGKTV) provides a ligand contact to ATP. T17 serves as a coordination point for Mg(2+). K33 is a catalytic residue. Mg(2+) is bound by residues R47 and E100. ATP is bound by residues 100–103 (EGAG) and 184–186 (PRL).

This sequence belongs to the dethiobiotin synthetase family. Homodimer. Requires Mg(2+) as cofactor.

The protein resides in the cytoplasm. It carries out the reaction (7R,8S)-7,8-diammoniononanoate + CO2 + ATP = (4R,5S)-dethiobiotin + ADP + phosphate + 3 H(+). It participates in cofactor biosynthesis; biotin biosynthesis; biotin from 7,8-diaminononanoate: step 1/2. Functionally, catalyzes a mechanistically unusual reaction, the ATP-dependent insertion of CO2 between the N7 and N8 nitrogen atoms of 7,8-diaminopelargonic acid (DAPA, also called 7,8-diammoniononanoate) to form a ureido ring. The protein is ATP-dependent dethiobiotin synthetase BioD of Rhodopseudomonas palustris (strain BisB18).